The sequence spans 422 residues: Adenylosuccinate synthetase (422 aa).

GTP-binding positions include 11-17 (GDEGKGK) and 39-41 (GHT). Aspartate 12 functions as the Proton acceptor in the catalytic mechanism. Positions 12 and 39 each coordinate Mg(2+). IMP contacts are provided by residues 12-15 (DEGK), 37-40 (NAGH), threonine 129, arginine 143, asparagine 219, threonine 234, and arginine 298. Histidine 40 serves as the catalytic Proton donor. 294 to 300 (VTTGRRR) contributes to the substrate binding site. GTP is bound by residues arginine 300, 326-328 (KLD), and 409-411 (GTG).

Belongs to the adenylosuccinate synthetase family. As to quaternary structure, homodimer. It depends on Mg(2+) as a cofactor.

The protein resides in the cytoplasm. It carries out the reaction IMP + L-aspartate + GTP = N(6)-(1,2-dicarboxyethyl)-AMP + GDP + phosphate + 2 H(+). Its pathway is purine metabolism; AMP biosynthesis via de novo pathway; AMP from IMP: step 1/2. Functionally, plays an important role in the de novo pathway and in the salvage pathway of purine nucleotide biosynthesis. Catalyzes the first committed step in the biosynthesis of AMP from IMP. The polypeptide is Adenylosuccinate synthetase (Blastomyces gilchristii (strain SLH14081) (Blastomyces dermatitidis)).